A 199-amino-acid polypeptide reads, in one-letter code: Putative HMP/thiamine permease protein YkoE (199 aa).

6 consecutive transmembrane segments (helical) span residues 9–29 (IVIM…FTHF), 40–60 (IAYE…AYMI), 63–83 (PGAA…LGNP), 85–105 (GPMV…VFLA), 114–134 (PVLM…DLFV), and 143–163 (GYLL…AGLL).

In terms of assembly, the complex is composed of two ATP-binding proteins (YkoD), two transmembrane proteins (YkoC and YkoE) and a solute-binding protein (YkoF).

The protein localises to the cell membrane. Its function is as follows. Part of the ABC transporter complex YkoCDEF that could transport hydroxymethylpyrimidine (HMP) and/or thiamine. Could also transport other HMP-containing products. Probably responsible for the translocation of the substrate across the membrane. In Bacillus subtilis (strain 168), this protein is Putative HMP/thiamine permease protein YkoE (ykoE).